Here is a 93-residue protein sequence, read N- to C-terminus: Insertion element ISR1 uncharacterized 11 kDa protein A1 (93 aa).

Disordered stretches follow at residues 14 to 33 (RRARTTRSARPAEGPGQERR) and 68 to 93 (RRRAPQASDGHAATVTCRWRPTSAGR).

This Rhizobium sp protein is Insertion element ISR1 uncharacterized 11 kDa protein A1.